Reading from the N-terminus, the 470-residue chain is 3-isopropylmalate dehydratase large subunit (470 aa).

Residues 50-121 (NVARGCQHRH…PCGRPGAGRH (72 aa)) form a disordered region. [4Fe-4S] cluster is bound by residues cysteine 349, cysteine 409, and cysteine 412.

This sequence belongs to the aconitase/IPM isomerase family. LeuC type 1 subfamily. In terms of assembly, heterodimer of LeuC and LeuD. [4Fe-4S] cluster is required as a cofactor.

The catalysed reaction is (2R,3S)-3-isopropylmalate = (2S)-2-isopropylmalate. The protein operates within amino-acid biosynthesis; L-leucine biosynthesis; L-leucine from 3-methyl-2-oxobutanoate: step 2/4. Its function is as follows. Catalyzes the isomerization between 2-isopropylmalate and 3-isopropylmalate, via the formation of 2-isopropylmaleate. The sequence is that of 3-isopropylmalate dehydratase large subunit from Azotobacter vinelandii.